We begin with the raw amino-acid sequence, 346 residues long: fMet-Leu-Phe receptor (346 aa).

Residues N1 and N7 are each glycosylated (N-linked (GlcNAc...) asparagine). Residues 1 to 24 (NSSLPTNISGGTPAVSAGYLFLDI) are Extracellular-facing. A helical transmembrane segment spans residues 25–47 (ITYLVFAVTFVLGVLGNGLVIWV). At 48–58 (AGFRMTHTVTT) the chain is on the cytoplasmic side. A helical membrane pass occupies residues 59–80 (ISYLNLAVADFCFTSTLPFFMV). Topologically, residues 81–97 (RKAMGGHWPFGWFLCKF) are extracellular. An intrachain disulfide couples C95 to C173. Residues 98–118 (IFTIVDINLFGSVFLIALIAL) form a helical membrane-spanning segment. Topologically, residues 119-137 (DRCVCVLHPVWTQNHRTVS) are cytoplasmic. A helical transmembrane segment spans residues 138–159 (LAKKVIIGPWVMALLLTLPVII). At 160–202 (RVTTVPGKTGTVACTFNFSPWTNDPKERINVAIAMLTVRGIIR) the chain is on the extracellular side. Residues 203 to 223 (FIIGFSAPMSIVAVSYGLIAT) traverse the membrane as a helical segment. The Cytoplasmic segment spans residues 224 to 239 (KIHKQGLIKFSRPLRV). Residues 240-263 (LSFVAAAFFLCWSPYQVVALIATV) traverse the membrane as a helical segment. Residues 264 to 282 (RIRELLQGMYKEIGIAVDV) are Extracellular-facing. A helical membrane pass occupies residues 283–302 (TSALAFFNSCLNPMLYVFMG). The Cytoplasmic segment spans residues 303-346 (QDFRERLIHALPASLERALTEDSTQTSDTATNSTLPSAEVALQA). The disordered stretch occupies residues 322–346 (TEDSTQTSDTATNSTLPSAEVALQA). Polar residues predominate over residues 323–338 (EDSTQTSDTATNSTLP).

Belongs to the G-protein coupled receptor 1 family. In terms of processing, phosphorylated; which is necessary for desensitization.

The protein resides in the cell membrane. High affinity receptor for N-formyl-methionyl peptides (fMLP), which are powerful neutrophil chemotactic factors. Binding of fMLP to the receptor stimulates intracellular calcium mobilization and superoxide anion release. This response is mediated via a G-protein that activates a phosphatidylinositol-calcium second messenger system. Receptor for TAFA4, mediates its effects on chemoattracting macrophages, promoting phagocytosis and increasing ROS release. Receptor for cathepsin CTSG, leading to increased phagocyte chemotaxis. The chain is fMet-Leu-Phe receptor (FPR1) from Pan troglodytes (Chimpanzee).